Here is a 409-residue protein sequence, read N- to C-terminus: Na(+)-translocating NADH-quinone reductase subunit F (409 aa).

A helical transmembrane segment spans residues 5-25 (FIFGIGAFTAIVLVLAVVILI). One can recognise a 2Fe-2S ferredoxin-type domain in the interval 34 to 128 (GDITISINDD…SMDVELPEEV (95 aa)). [2Fe-2S] cluster contacts are provided by cysteine 71, cysteine 77, cysteine 80, and cysteine 112. In terms of domain architecture, FAD-binding FR-type spans 131 to 271 (VKKWECTVIS…SGPFGEFFAK (141 aa)).

Belongs to the NqrF family. As to quaternary structure, composed of six subunits; NqrA, NqrB, NqrC, NqrD, NqrE and NqrF. The cofactor is [2Fe-2S] cluster. FAD serves as cofactor.

It localises to the cell inner membrane. It catalyses the reaction a ubiquinone + n Na(+)(in) + NADH + H(+) = a ubiquinol + n Na(+)(out) + NAD(+). Functionally, NQR complex catalyzes the reduction of ubiquinone-1 to ubiquinol by two successive reactions, coupled with the transport of Na(+) ions from the cytoplasm to the periplasm. The first step is catalyzed by NqrF, which accepts electrons from NADH and reduces ubiquinone-1 to ubisemiquinone by a one-electron transfer pathway. The polypeptide is Na(+)-translocating NADH-quinone reductase subunit F (Actinobacillus succinogenes (strain ATCC 55618 / DSM 22257 / CCUG 43843 / 130Z)).